A 163-amino-acid polypeptide reads, in one-letter code: uncharacterized protein (163 aa).

A compositionally biased stretch (basic and acidic residues) spans 1 to 10 (MGVPRAREGR). The disordered stretch occupies residues 1 to 163 (MGVPRAREGR…WSFTPLRWGS (163 aa)).

This is an uncharacterized protein from Homo sapiens (Human).